Reading from the N-terminus, the 505-residue chain is Flagellin (505 aa).

This sequence belongs to the bacterial flagellin family.

It is found in the secreted. Its subcellular location is the bacterial flagellum. Flagellin is the subunit protein which polymerizes to form the filaments of bacterial flagella. The chain is Flagellin (fliC) from Salmonella enteritidis.